The sequence spans 231 residues: 7-cyano-7-deazaguanine synthase (231 aa).

8 to 18 (FSGGQDSTTCL) contacts ATP. Positions 188, 197, 200, and 203 each coordinate Zn(2+).

Belongs to the QueC family. Zn(2+) is required as a cofactor.

The enzyme catalyses 7-carboxy-7-deazaguanine + NH4(+) + ATP = 7-cyano-7-deazaguanine + ADP + phosphate + H2O + H(+). The protein operates within purine metabolism; 7-cyano-7-deazaguanine biosynthesis. Catalyzes the ATP-dependent conversion of 7-carboxy-7-deazaguanine (CDG) to 7-cyano-7-deazaguanine (preQ(0)). This is 7-cyano-7-deazaguanine synthase from Salmonella arizonae (strain ATCC BAA-731 / CDC346-86 / RSK2980).